The chain runs to 112 residues: Large ribosomal subunit protein eL30 (112 aa).

Belongs to the eukaryotic ribosomal protein eL30 family.

This Dictyostelium discoideum (Social amoeba) protein is Large ribosomal subunit protein eL30 (rpl30).